The chain runs to 162 residues: Photosystem II extrinsic protein V (162 aa).

The first 25 residues, 1 to 25 (MLKRCLWLVVTVLFAWQVFNGTAIA), serve as a signal peptide directing secretion. Residues Cys62, Cys65, His66, and His117 each coordinate heme c.

Belongs to the cytochrome c family. PsbV subfamily. In terms of assembly, PSII is composed of 1 copy each of membrane proteins PsbA, PsbB, PsbC, PsbD, PsbE, PsbF, PsbH, PsbI, PsbJ, PsbK, PsbL, PsbM, PsbT, PsbX, PsbY, PsbZ, Psb30/Ycf12, peripheral proteins PsbO, CyanoQ (PsbQ), PsbU, PsbV and a large number of cofactors. It forms dimeric complexes. Heme c serves as cofactor.

The protein localises to the cellular thylakoid membrane. Its function is as follows. One of the extrinsic, lumenal subunits of photosystem II (PSII). PSII is a light-driven water plastoquinone oxidoreductase, using light energy to abstract electrons from H(2)O, generating a proton gradient subsequently used for ATP formation. The extrinsic proteins stabilize the structure of photosystem II oxygen-evolving complex (OEC), the ion environment of oxygen evolution and protect the OEC against heat-induced inactivation. Low-potential cytochrome c that plays a role in the OEC of PSII. This chain is Photosystem II extrinsic protein V, found in Cyanothece sp. (strain PCC 7425 / ATCC 29141).